A 582-amino-acid polypeptide reads, in one-letter code: Bifunctional lycopene cyclase/phytoene synthase (582 aa).

Positions 1–261 (MNQNGTRLCY…VVLGLVGCDY (261 aa)) are lycopene beta-cyclase. A run of 6 helical transmembrane segments spans residues 34 to 54 (CTYTIPAASALTVLYYPFFTA), 59 to 79 (KICILITIAILATLPWDSYLI), 99 to 121 (IPIEEVFFFAIQTYITSLTYCIF), 142 to 162 (YVVATVILALMGGGTACLLLG), 170 to 190 (LILVWACPILLFQWMMSYPFL), and 242 to 262 (ALFFLVSNMMVVLGLVGCDYA). The tract at residues 268–582 (YESLSQPASD…LLSALVYRLE (315 aa)) is phytoene synthase.

In the N-terminal section; belongs to the lycopene beta-cyclase family. The protein in the C-terminal section; belongs to the phytoene/squalene synthase family.

Its subcellular location is the membrane. It carries out the reaction all-trans-lycopene = gamma-carotene. The catalysed reaction is gamma-carotene = all-trans-beta-carotene. It catalyses the reaction 2 (2E,6E,10E)-geranylgeranyl diphosphate = 15-cis-phytoene + 2 diphosphate. It functions in the pathway carotenoid biosynthesis; beta-carotene biosynthesis. Its pathway is carotenoid biosynthesis; phytoene biosynthesis; all-trans-phytoene from geranylgeranyl diphosphate: step 1/1. Its function is as follows. Bifunctional enzyme that catalyzes the reactions from geranylgeranyl diphosphate to phytoene (phytoene synthase) and lycopene to beta-carotene via the intermediate gamma-carotene (lycopene cyclase). The sequence is that of Bifunctional lycopene cyclase/phytoene synthase from Aspergillus niger (strain ATCC MYA-4892 / CBS 513.88 / FGSC A1513).